The chain runs to 95 residues: Fungal defensin plectasin (95 aa).

A signal peptide spans 1–23 (MQFTTILSIGITVFGLLNTGAFA). A propeptide spanning residues 24 to 55 (APQPVPEAYAVSDPEAHPDDFAGMDANQLQKR) is cleaved from the precursor. 3 residues coordinate beta-D-GlcNAc-(1-&gt;4)-Mur2Ac(oyl-L-Ala-gamma-D-Glu-L-Lys-D-Ala-D-Ala)-di-trans,octa-cis-undecaprenyl diphosphate: phenylalanine 57, glycine 58, and cysteine 59. Cystine bridges form between cysteine 59–cysteine 85, cysteine 70–cysteine 92, and cysteine 74–cysteine 94. Residues 61–64 (GPWD) are binds to membrane interface. Positions 67, 73, 84, 86, 88, 92, and 93 each coordinate beta-D-GlcNAc-(1-&gt;4)-Mur2Ac(oyl-L-Ala-gamma-D-Glu-L-Lys-D-Ala-D-Ala)-di-trans,octa-cis-undecaprenyl diphosphate. The segment at 86 to 92 (AKGGFVC) is binds to membrane interface.

It belongs to the invertebrate defensin family. Type 2 subfamily.

It localises to the secreted. It is found in the host cell membrane. Its function is as follows. Antimicrobial peptide that potently acts against several species of Gram-positive bacteria. It selectively inhibits peptidoglycan biosynthesis through complex formation with the cell wall precursor lipid II (1:1 molar ratio) thus inhibiting cell wall synthesis. It does not disrupt cell membranes. Is especially active against numerous clinical isolates of S.pneumoniae, including all 90 different serotypes and isolates resistant to clinically used antibiotics. In vitro, shows considerable selectivity for bacteria over mammalian cells. The peptide synthesized in D-amino acids does not show antibacterial activity. In vitro, acts on voltage-gated potassium channels by moderately inhibiting mammalian Kv1.3/KCNA3 (IC(50)=2.8 uM), and moderately inhibiting others potassium channels. This chain is Fungal defensin plectasin (DEF), found in Pseudoplectania nigrella (Ebony cup).